Reading from the N-terminus, the 260-residue chain is Ribonuclease HII (260 aa).

The RNase H type-2 domain maps to 70-260 (QAIAGIDEVG…PIKSMLKEKN (191 aa)). 3 residues coordinate a divalent metal cation: aspartate 76, glutamate 77, and aspartate 171.

It belongs to the RNase HII family. It depends on Mn(2+) as a cofactor. Mg(2+) is required as a cofactor.

Its subcellular location is the cytoplasm. The catalysed reaction is Endonucleolytic cleavage to 5'-phosphomonoester.. Endonuclease that specifically degrades the RNA of RNA-DNA hybrids. In Streptococcus mutans serotype c (strain ATCC 700610 / UA159), this protein is Ribonuclease HII.